Here is a 421-residue protein sequence, read N- to C-terminus: MGDWSKLPEELLGLIALRLYSVIELIRFRSICKSWRSSASGVNKNHSLSSPLIYFKPLQIILARAQANGQILSKYHGTVLSRATFFRVTLASSPDQGWLIKSDTDLKYRNFHLLNCLSRKALGRSRKLISLSEFIVSEIQESYAVVGRRTRETASEFKRVFLVRVQGGDHRVLVIGIDGKIRFWKGGIWNGIKKQVAQFSDFVLDEGLTYAVDTKGIMWWISSAYDIIRYGTKLHENITNGSCGEKRFVRCRGELYIVDRLIDENLLKRKADSYDDNAIVHFRNADYTNADLWEDGNGNDDFFAAQAHRFIHVLHDNLGNVSCKPFERDPPKTIGFKVYKNDEELLKWVEVKSLGDKAIVIATDACFSVSAHEFYGCLPNSIYFTDKKEEEVKVFKLDDGSITTMSESEQSCFQMFVPSFL.

The F-box domain maps to 2 to 50 (GDWSKLPEELLGLIALRLYSVIELIRFRSICKSWRSSASGVNKNHSLSS).

In terms of biological role, involved in heat stress response. Contributes to recovery from heat stress. The protein is F-box protein At2g17690 of Arabidopsis thaliana (Mouse-ear cress).